The chain runs to 698 residues: Voltage-dependent calcium channel beta subunit-associated regulatory protein (698 aa).

Residues 1 to 41 lie on the Extracellular side of the membrane; it reads MQPTATMATAAATTATVALTTSWDNATSRPTAEPDPILDNY. N-linked (GlcNAc...) asparagine glycosylation occurs at asparagine 25. A helical; Signal-anchor for type III membrane protein membrane pass occupies residues 42 to 62; it reads VLLVVVMSLFVGGTLVVLSGV. The Cytoplasmic segment spans residues 63 to 698; that stretch reads LLLCKRCWEV…APTSPDHSPA (636 aa). 2 disordered regions span residues 90 to 124 and 185 to 275; these read YLDN…TSST and ASAA…SSGS. Residues 185–197 are compositionally biased toward low complexity; sequence ASAAATPHPATTS. Phosphoserine is present on residues serine 290 and serine 295. Disordered regions lie at residues 308 to 339, 360 to 421, 438 to 536, and 554 to 648; these read SQRA…EQEG, PPPR…HAQC, ATAS…RRDY, and PHFD…GSGL. Residues 360-375 are compositionally biased toward pro residues; sequence PPPRPFLASPTSPPPT. Positions 402–413 are enriched in low complexity; it reads PEHAQQQDPQQE. Over residues 459–468 the composition is skewed to gly residues; sequence SGSGSGGGGA. A compositionally biased stretch (pro residues) spans 471–482; sequence AFPPPPESPPAL. The span at 483 to 493 shows a compositional bias: basic and acidic residues; it reads RPKDGEARRLL. A phosphoserine mark is found at serine 501, serine 520, and serine 524. Basic residues predominate over residues 562 to 576; it reads HRTRAHPHTHARKQW. Residue serine 610 is modified to Phosphoserine. Residue threonine 691 is modified to Phosphothreonine. Phosphoserine occurs at positions 692 and 696.

Interacts with voltage-dependent calcium channels CACNB1, CACNB2, CACNB3 and CACNB4 beta subunits; prevents their interaction with the CACNA1C alpha subunit thereby negatively regulating the activity of the corresponding calcium channels. Expressed by neurons in the cortex, cerebellum and hippocampus and by pancreatic beta cells (at protein level).

Its subcellular location is the cytoplasmic vesicle. The protein localises to the secretory vesicle. It is found in the synaptic vesicle membrane. The protein resides in the cell membrane. It localises to the cell projection. Its subcellular location is the growth cone. Its function is as follows. Negatively regulates voltage-gated calcium channels by preventing the interaction between their alpha and beta subunits. Thereby, negatively regulates calcium channels activity at the plasma membrane and indirectly inhibits calcium-regulated exocytosis. The sequence is that of Voltage-dependent calcium channel beta subunit-associated regulatory protein from Mus musculus (Mouse).